A 188-amino-acid polypeptide reads, in one-letter code: Ribosome-recycling factor (188 aa).

The protein belongs to the RRF family.

The protein localises to the cytoplasm. In terms of biological role, responsible for the release of ribosomes from messenger RNA at the termination of protein biosynthesis. May increase the efficiency of translation by recycling ribosomes from one round of translation to another. This is Ribosome-recycling factor from Blochmanniella floridana.